Here is a 179-residue protein sequence, read N- to C-terminus: Large ribosomal subunit protein uL5 (179 aa).

The protein belongs to the universal ribosomal protein uL5 family. As to quaternary structure, part of the 50S ribosomal subunit; part of the 5S rRNA/L5/L18/L25 subcomplex. Contacts the 5S rRNA and the P site tRNA. Forms a bridge to the 30S subunit in the 70S ribosome.

In terms of biological role, this is one of the proteins that bind and probably mediate the attachment of the 5S RNA into the large ribosomal subunit, where it forms part of the central protuberance. In the 70S ribosome it contacts protein S13 of the 30S subunit (bridge B1b), connecting the 2 subunits; this bridge is implicated in subunit movement. Contacts the P site tRNA; the 5S rRNA and some of its associated proteins might help stabilize positioning of ribosome-bound tRNAs. This is Large ribosomal subunit protein uL5 from Francisella tularensis subsp. mediasiatica (strain FSC147).